A 237-amino-acid chain; its full sequence is Cysteine-rich venom protein DIS1 (237 aa).

The signal sequence occupies residues 1–18; that stretch reads MFVFILLSLAAVLQQSFG. Residues 37–165 enclose the SCP domain; the sequence is VDKHNAFRRS…SYNYFYVCQY (129 aa). 7 disulfide bridges follow: C74–C152, C91–C166, C147–C163, C185–C192, C188–C197, C201–C234, and C219–C232. The region spanning 201 to 234 is the ShKT domain; it reads CSREDVFMNCKSLVAQSNCQDDYIRKNCPATCFC.

It belongs to the CRISP family. Expressed by the venom gland.

The protein localises to the secreted. Functionally, weakly blocks contraction of smooth muscle elicited by high potassium-induced depolarization, but does not block caffeine-stimulated contraction. May target voltage-gated calcium channels on smooth muscle. The protein is Cysteine-rich venom protein DIS1 of Dispholidus typus (Boomslang).